We begin with the raw amino-acid sequence, 511 residues long: Membrane-bound lytic murein transglycosylase F (511 aa).

The N-terminal stretch at 1 to 19 (MKKLKINYLLIGIVTLLLA) is a signal peptide. The interval 20–269 (AALWPSIPWS…RLEEKYLGHG (250 aa)) is non-LT domain. The segment at 270 to 511 (NDFDYVDTRT…ARMKLPGHLY (242 aa)) is LT domain. E314 is an active-site residue.

The protein in the N-terminal section; belongs to the bacterial solute-binding protein 3 family. This sequence in the C-terminal section; belongs to the transglycosylase Slt family.

It is found in the cell outer membrane. It carries out the reaction Exolytic cleavage of the (1-&gt;4)-beta-glycosidic linkage between N-acetylmuramic acid (MurNAc) and N-acetylglucosamine (GlcNAc) residues in peptidoglycan, from either the reducing or the non-reducing ends of the peptidoglycan chains, with concomitant formation of a 1,6-anhydrobond in the MurNAc residue.. Murein-degrading enzyme that degrades murein glycan strands and insoluble, high-molecular weight murein sacculi, with the concomitant formation of a 1,6-anhydromuramoyl product. Lytic transglycosylases (LTs) play an integral role in the metabolism of the peptidoglycan (PG) sacculus. Their lytic action creates space within the PG sacculus to allow for its expansion as well as for the insertion of various structures such as secretion systems and flagella. This chain is Membrane-bound lytic murein transglycosylase F, found in Klebsiella pneumoniae subsp. pneumoniae (strain ATCC 700721 / MGH 78578).